The chain runs to 159 residues: Aphid transmission protein (159 aa).

Belongs to the caulimoviridae ORF II family.

Its function is as follows. This protein is involved in virus transmission. The polypeptide is Aphid transmission protein (Cauliflower mosaic virus (strain BBC) (CaMV)).